A 262-amino-acid chain; its full sequence is Abhydrolase domain-containing protein ACTT2 (262 aa).

The Peroxisomal targeting signal type 1 motif lies at 260-262 (SKL).

It belongs to the AB hydrolase superfamily. AKT2 hydrolase family.

It is found in the peroxisome. It functions in the pathway mycotoxin biosynthesis. Functionally, abhydrolase domain-containing protein; part of the gene clusters that mediate the biosynthesis of the host-selective toxins (HSTs) ACT-toxins responsible for brown spot of tangerine disease by the tangerine pathotype which affects tangerines and mandarins. ACT-toxins consist of three moieties, 9,10-epoxy-8-hydroxy-9-methyl-decatrienoic acid (EDA), valine and a polyketide. ACT-toxin I is toxic to both citrus and pear; toxin II the 5''-deoxy derivative of ACT-toxin I, is highly toxic to pear and slightly toxic to citrus. On cellular level, ACT-toxins affect plasma membrane of susceptible cells and cause a sudden increase in loss of K(+) after a few minutes of toxin treatment. The acyl-CoA ligase ACTT1, the hydrolase ACTT2, the enoyl-CoA hydratases ACTT3 and ACTT6, and the acyl-CoA synthetase ACTT5 are all involved in the biosynthesis of the AK-, AF- and ACT-toxin common 9,10-epoxy-8-hydroxy-9-methyl-decatrienoic acid (EDA) structural moiety. The exact role of each enzyme, and of additional enzymes identified within the AF-toxin clusters have still to be determined. On the other hand, ACTTS1 to ACTTS4 are specific to the tangerine pathotype. The function of ACTTS3 is to elongate the polyketide chain portion of ACT-toxin that is unique to this toxin. The enoyl-reductase ACTTS2 might complement the missing enoyl-reductase (ER) domain in ACTTS3 in the synthesis of the polyketide portion of ACT-toxin. The roles of the nonribosomal peptide synthetases-related proteins ACTTS1 and ACTTS4 have also still not been elucidated. This chain is Abhydrolase domain-containing protein ACTT2, found in Alternaria alternata (Alternaria rot fungus).